A 360-amino-acid polypeptide reads, in one-letter code: Protein Wnt-2 (360 aa).

The N-terminal stretch at 1 to 25 (MNAPLCGIWLWLPLLLTWLTPEVSS) is a signal peptide. 11 disulfides stabilise this stretch: Cys76-Cys87, Cys127-Cys135, Cys137-Cys157, Cys206-Cys220, Cys208-Cys215, Cys278-Cys309, Cys294-Cys304, Cys308-Cys348, Cys324-Cys339, Cys326-Cys336, and Cys331-Cys332. The O-palmitoleoyl serine; by PORCN moiety is linked to residue Ser212. N-linked (GlcNAc...) asparagine glycosylation occurs at Asn295.

Belongs to the Wnt family. Post-translationally, palmitoleoylation is required for efficient binding to frizzled receptors. Depalmitoleoylation leads to Wnt signaling pathway inhibition.

It localises to the secreted. Its subcellular location is the extracellular space. The protein localises to the extracellular matrix. In terms of biological role, ligand for members of the frizzled family of seven transmembrane receptors. Functions in the canonical Wnt signaling pathway that results in activation of transcription factors of the TCF/LEF family. Functions as a upstream regulator of FGF10 expression. Plays an important role in embryonic lung development. May contribute to embryonic brain development by regulating the proliferation of dopaminergic precursors and neurons. The protein is Protein Wnt-2 (WNT2) of Otolemur garnettii (Small-eared galago).